We begin with the raw amino-acid sequence, 1006 residues long: D-2-hydroxyglutarate dehydrogenase (1006 aa).

Residues 47-279 (YQRLPQAAVF…VEAKLNVLPI (233 aa)) form the FAD-binding PCMH-type domain. The (R)-2-hydroxyglutarate site is built by R397 and H495. Residues 655–687 (SHEVYDAMAGCLACKSCAGQCPIKVNVPDFRSR) form the 4Fe-4S ferredoxin-type domain. Residues C665, C668, C671, and C675 each coordinate [4Fe-4S] cluster.

It in the N-terminal section; belongs to the FAD-binding oxidoreductase/transferase type 4 family. [4Fe-4S] cluster is required as a cofactor. The cofactor is FAD.

The catalysed reaction is (R)-2-hydroxyglutarate + A = 2-oxoglutarate + AH2. It participates in amino-acid degradation. Its function is as follows. Catalyzes the oxidation of D-2-hydroxyglutarate (D-2-HGA) to 2-oxoglutarate. Is involved in a D-lysine catabolic pathway. This chain is D-2-hydroxyglutarate dehydrogenase, found in Pseudomonas putida (strain ATCC 47054 / DSM 6125 / CFBP 8728 / NCIMB 11950 / KT2440).